We begin with the raw amino-acid sequence, 462 residues long: Glycerol-3-phosphate acyltransferase ATS12, chloroplastic (462 aa).

A chloroplast-targeting transit peptide spans 1-82 (MFILSSSSST…DKESAQSAAT (82 aa)). The short motif at 233–238 (HQTEAD) is the HXXXXD motif element.

This sequence belongs to the GPAT/DAPAT family.

It localises to the plastid. The protein resides in the chloroplast stroma. It catalyses the reaction a fatty acyl-[ACP] + sn-glycerol 3-phosphate = a 1-acyl-sn-glycero-3-phosphate + holo-[ACP]. The catalysed reaction is sn-glycerol 3-phosphate + an acyl-CoA = a 1-acyl-sn-glycero-3-phosphate + CoA. The protein operates within phospholipid metabolism; CDP-diacylglycerol biosynthesis; CDP-diacylglycerol from sn-glycerol 3-phosphate: step 1/3. In terms of biological role, esterifies the acyl-group from acyl-acyl carrier proteins (acyl-ACPs) to the sn-1 position of glycerol-3-phosphate. The physiological acyl donors in chloroplasts are acyl-ACPs, but acyl-CoAs are used as artificial donor for in vitro reactions. The enzyme from chilling-resistant plants discriminates against non-fluid palmitic acid and selects oleic acid whereas the enzyme from sensitive plants accepts both fatty acids. Squash is chilling-sensitive. Does not seem to discriminate between the acyl-ACP thioesters 18:1-ACP, 18:0-ACP and 16:0-ACP. Exhibits higher selectivity for 16:0-CoA than 18:1-CoA in vitro. This Cucurbita moschata (Winter crookneck squash) protein is Glycerol-3-phosphate acyltransferase ATS12, chloroplastic.